A 516-amino-acid chain; its full sequence is Cytochrome P450 1A1 (516 aa).

The tract at residues 33 to 44 (WQPRVPKGLKSP) is mitochondrial targeting signal. An O-linked (GlcNAc) serine glycan is attached at serine 71. Phenylalanine 228 contacts substrate. Position 461 (cysteine 461) interacts with heme.

This sequence belongs to the cytochrome P450 family. Interacts with cytosolic chaperones HSP70 and HSP90; this interaction is required for initial targeting to mitochondria. Interacts (via mitochondrial targeting signal) with TOMM40 (via N-terminus); this interaction is required for translocation across the mitochondrial outer membrane. It depends on heme as a cofactor.

The protein localises to the endoplasmic reticulum membrane. Its subcellular location is the mitochondrion inner membrane. The protein resides in the microsome membrane. It is found in the cytoplasm. The enzyme catalyses an organic molecule + reduced [NADPH--hemoprotein reductase] + O2 = an alcohol + oxidized [NADPH--hemoprotein reductase] + H2O + H(+). The catalysed reaction is estrone + reduced [NADPH--hemoprotein reductase] + O2 = 2-hydroxyestrone + oxidized [NADPH--hemoprotein reductase] + H2O + H(+). It catalyses the reaction estrone + reduced [NADPH--hemoprotein reductase] + O2 = 4-hydroxyestrone + oxidized [NADPH--hemoprotein reductase] + H2O + H(+). It carries out the reaction estrone + reduced [NADPH--hemoprotein reductase] + O2 = 6alpha-hydroxyestrone + oxidized [NADPH--hemoprotein reductase] + H2O + H(+). The enzyme catalyses estrone + reduced [NADPH--hemoprotein reductase] + O2 = 15alpha-hydroxyestrone + oxidized [NADPH--hemoprotein reductase] + H2O + H(+). The catalysed reaction is estrone + reduced [NADPH--hemoprotein reductase] + O2 = 16alpha-hydroxyestrone + oxidized [NADPH--hemoprotein reductase] + H2O + H(+). It catalyses the reaction 17beta-estradiol + reduced [NADPH--hemoprotein reductase] + O2 = 2-hydroxy-17beta-estradiol + oxidized [NADPH--hemoprotein reductase] + H2O + H(+). It carries out the reaction 17beta-estradiol + reduced [NADPH--hemoprotein reductase] + O2 = 4-hydroxy-17beta-estradiol + oxidized [NADPH--hemoprotein reductase] + H2O + H(+). The enzyme catalyses 17beta-estradiol + reduced [NADPH--hemoprotein reductase] + O2 = 6alpha-hydroxy-17beta-estradiol + oxidized [NADPH--hemoprotein reductase] + H2O + H(+). The catalysed reaction is 17beta-estradiol + reduced [NADPH--hemoprotein reductase] + O2 = 7alpha-hydroxy-17beta-estradiol + oxidized [NADPH--hemoprotein reductase] + H2O + H(+). It catalyses the reaction 17beta-estradiol + reduced [NADPH--hemoprotein reductase] + O2 = 15alpha-hydroxy-17beta-estradiol + oxidized [NADPH--hemoprotein reductase] + H2O + H(+). It carries out the reaction (5Z,8Z,11Z)-eicosatrienoate + reduced [NADPH--hemoprotein reductase] + O2 = 19-hydroxy-(5Z,8Z,11Z)-eicosatrienoate + oxidized [NADPH--hemoprotein reductase] + H2O + H(+). The enzyme catalyses (5Z,8Z,11Z,14Z)-eicosatetraenoate + reduced [NADPH--hemoprotein reductase] + O2 = 16-hydroxy-(5Z,8Z,11Z,14Z)-eicosatetraenoate + oxidized [NADPH--hemoprotein reductase] + H2O + H(+). The catalysed reaction is (5Z,8Z,11Z,14Z)-eicosatetraenoate + reduced [NADPH--hemoprotein reductase] + O2 = 17-hydroxy-(5Z,8Z,11Z,14Z)-eicosatetraenoate + oxidized [NADPH--hemoprotein reductase] + H2O + H(+). It catalyses the reaction (5Z,8Z,11Z,14Z)-eicosatetraenoate + reduced [NADPH--hemoprotein reductase] + O2 = 18-hydroxy-(5Z,8Z,11Z,14Z)-eicosatetraenoate + oxidized [NADPH--hemoprotein reductase] + H2O + H(+). It carries out the reaction (5Z,8Z,11Z,14Z)-eicosatetraenoate + reduced [NADPH--hemoprotein reductase] + O2 = 19-hydroxy-(5Z,8Z,11Z,14Z)-eicosatetraenoate + oxidized [NADPH--hemoprotein reductase] + H2O + H(+). The enzyme catalyses (5Z,8Z,11Z,14Z,17Z)-eicosapentaenoate + reduced [NADPH--hemoprotein reductase] + O2 = 19-hydroxy-(5Z,8Z,11Z,14Z,17Z)-eicosapentaenoate + oxidized [NADPH--hemoprotein reductase] + H2O + H(+). The catalysed reaction is (5Z,8Z,11Z,14Z)-eicosatetraenoate + reduced [NADPH--hemoprotein reductase] + O2 = (8R,9S)-epoxy-(5Z,11Z,14Z)-eicosatrienoate + oxidized [NADPH--hemoprotein reductase] + H2O + H(+). It catalyses the reaction (5Z,8Z,11Z,14Z)-eicosatetraenoate + reduced [NADPH--hemoprotein reductase] + O2 = (11R,12S)-epoxy-(5Z,8Z,14Z)-eicosatrienoate + oxidized [NADPH--hemoprotein reductase] + H2O + H(+). It carries out the reaction (5Z,8Z,11Z,14Z)-eicosatetraenoate + reduced [NADPH--hemoprotein reductase] + O2 = (14S,15R)-epoxy-(5Z,8Z,11Z)-eicosatrienoate + oxidized [NADPH--hemoprotein reductase] + H2O + H(+). The enzyme catalyses (5Z,8Z,11Z,14Z)-eicosatetraenoate + reduced [NADPH--hemoprotein reductase] + O2 = (14R,15S)-epoxy-(5Z,8Z,11Z)-eicosatrienoate + oxidized [NADPH--hemoprotein reductase] + H2O + H(+). The catalysed reaction is (5Z,8Z,11Z,14Z,17Z)-eicosapentaenoate + reduced [NADPH--hemoprotein reductase] + O2 = (17R,18S)-epoxy-(5Z,8Z,11Z,14Z)-eicosatetraenoate + oxidized [NADPH--hemoprotein reductase] + H2O + H(+). It catalyses the reaction (4Z,7Z,10Z,13Z,16Z,19Z)-docosahexaenoate + reduced [NADPH--hemoprotein reductase] + O2 = (19S,20R)-epoxy-(4Z,7Z,10Z,13Z,16Z)-docosapentaenoate + oxidized [NADPH--hemoprotein reductase] + H2O + H(+). It carries out the reaction (4Z,7Z,10Z,13Z,16Z,19Z)-docosahexaenoate + reduced [NADPH--hemoprotein reductase] + O2 = (19R,20S)-epoxy-(4Z,7Z,10Z,13Z,16Z)-docosapentaenoate + oxidized [NADPH--hemoprotein reductase] + H2O + H(+). The enzyme catalyses all-trans-retinol + reduced [NADPH--hemoprotein reductase] + O2 = all-trans-retinal + oxidized [NADPH--hemoprotein reductase] + 2 H2O + H(+). The catalysed reaction is all-trans-retinal + reduced [NADPH--hemoprotein reductase] + O2 = all-trans-retinoate + oxidized [NADPH--hemoprotein reductase] + H2O + 2 H(+). It catalyses the reaction (13S)-hydroperoxy-(9Z,11E)-octadecadienoate = 13-oxo-(9Z,11E)-octadecadienoate + H2O. It carries out the reaction (12S)-hydroperoxy-(5Z,8Z,10E,14Z)-eicosatetraenoate = 12-oxo-(5Z,8Z,10E,14Z)-eicosatetraenoate + H2O. The enzyme catalyses (15S)-hydroperoxy-(5Z,8Z,11Z,13E)-eicosatetraenoate = 15-oxo-(5Z,8Z,11Z,13E)-eicosatetraenoate + H2O. The catalysed reaction is (5S)-hydroperoxy-(6E,8Z,11Z,14Z)-eicosatetraenoate = 5-oxo-(6E,8Z,11Z,14Z)-eicosatetraenoate + H2O. The protein operates within steroid hormone biosynthesis. It participates in lipid metabolism; fatty acid metabolism. It functions in the pathway cofactor metabolism; retinol metabolism. Functionally, a cytochrome P450 monooxygenase involved in the metabolism of various endogenous substrates, including fatty acids, steroid hormones and vitamins. Mechanistically, uses molecular oxygen inserting one oxygen atom into a substrate, and reducing the second into a water molecule, with two electrons provided by NADPH via cytochrome P450 reductase (CPR; NADPH-ferrihemoprotein reductase). Catalyzes the hydroxylation of carbon-hydrogen bonds. Exhibits high catalytic activity for the formation of hydroxyestrogens from estrone (E1) and 17beta-estradiol (E2), namely 2-hydroxy E1 and E2, as well as D-ring hydroxylated E1 and E2 at the C15alpha and C16alpha positions. Displays different regioselectivities for polyunsaturated fatty acids (PUFA) hydroxylation. Catalyzes the epoxidation of double bonds of certain PUFA. Converts arachidonic acid toward epoxyeicosatrienoic acid (EET) regioisomers, 8,9-, 11,12-, and 14,15-EET, that function as lipid mediators in the vascular system. Displays an absolute stereoselectivity in the epoxidation of eicosapentaenoic acid (EPA) producing the 17(R),18(S) enantiomer. May play an important role in all-trans retinoic acid biosynthesis in extrahepatic tissues. Catalyzes two successive oxidative transformation of all-trans retinol to all-trans retinal and then to the active form all-trans retinoic acid. May also participate in eicosanoids metabolism by converting hydroperoxide species into oxo metabolites (lipoxygenase-like reaction, NADPH-independent). This is Cytochrome P450 1A1 (CYP1A1) from Balaenoptera acutorostrata (Common minke whale).